The primary structure comprises 403 residues: Dual-specificity RNA methyltransferase RlmN (403 aa).

The active-site Proton acceptor is glutamate 126. A Radical SAM core domain is found at 132–375; the sequence is ETDRGTLCVS…VRTPRGRDIL (244 aa). A disulfide bridge links cysteine 139 with cysteine 378. [4Fe-4S] cluster is bound by residues cysteine 146, cysteine 150, and cysteine 153. S-adenosyl-L-methionine-binding positions include 204-205, serine 236, 258-260, and asparagine 335; these read GE and SLH. The active-site S-methylcysteine intermediate is cysteine 378.

It belongs to the radical SAM superfamily. RlmN family. [4Fe-4S] cluster is required as a cofactor.

It localises to the cytoplasm. It carries out the reaction adenosine(2503) in 23S rRNA + 2 reduced [2Fe-2S]-[ferredoxin] + 2 S-adenosyl-L-methionine = 2-methyladenosine(2503) in 23S rRNA + 5'-deoxyadenosine + L-methionine + 2 oxidized [2Fe-2S]-[ferredoxin] + S-adenosyl-L-homocysteine. It catalyses the reaction adenosine(37) in tRNA + 2 reduced [2Fe-2S]-[ferredoxin] + 2 S-adenosyl-L-methionine = 2-methyladenosine(37) in tRNA + 5'-deoxyadenosine + L-methionine + 2 oxidized [2Fe-2S]-[ferredoxin] + S-adenosyl-L-homocysteine. In terms of biological role, specifically methylates position 2 of adenine 2503 in 23S rRNA and position 2 of adenine 37 in tRNAs. m2A2503 modification seems to play a crucial role in the proofreading step occurring at the peptidyl transferase center and thus would serve to optimize ribosomal fidelity. The polypeptide is Dual-specificity RNA methyltransferase RlmN (Bradyrhizobium sp. (strain ORS 278)).